Here is a 349-residue protein sequence, read N- to C-terminus: Protein O-mannose kinase (349 aa).

The Cytoplasmic portion of the chain corresponds to 1-19 (MGQQHGARNGLTHRELPRG). Residues 20–42 (MGLLLAMALMNVVLYVCLDHLFI) traverse the membrane as a helical; Signal-anchor for type II membrane protein segment. Residues 43–349 (SPGRATEDPR…TVMSQTKEML (307 aa)) are Lumenal-facing. 3 N-linked (GlcNAc...) asparagine glycosylation sites follow: Asn-66, Asn-164, and Asn-219. One can recognise a Protein kinase domain in the interval 80–349 (VRQLKLVGEG…TVMSQTKEML (270 aa)).

It belongs to the protein kinase superfamily. Ser/Thr protein kinase family. STKL subfamily.

It is found in the endoplasmic reticulum membrane. It carries out the reaction 3-O-[beta-D-GalNAc-(1-&gt;3)-beta-D-GlcNAc-(1-&gt;4)-alpha-D-Man]-L-Thr-[protein] + ATP = 3-O-[beta-D-GalNAc-(1-&gt;3)-beta-D-GlcNAc-(1-&gt;4)-(O-6-P-alpha-D-Man)]-Thr-[protein] + ADP + H(+). In terms of biological role, protein O-mannose kinase that specifically mediates phosphorylation at the 6-position of an O-mannose of the trisaccharide (N-acetylgalactosamine (GalNAc)-beta-1,3-N-acetylglucosamine (GlcNAc)-beta-1,4-mannose) to generate phosphorylated O-mannosyl trisaccharide (N-acetylgalactosamine-beta-1,3-N-acetylglucosamine-beta-1,4-(phosphate-6-)mannose). Phosphorylated O-mannosyl trisaccharide is a carbohydrate structure present in alpha-dystroglycan (DAG1), which is required for binding laminin G-like domain-containing extracellular proteins with high affinity. Only shows kinase activity when the GalNAc-beta-3-GlcNAc-beta-terminus is linked to the 4-position of O-mannose, suggesting that this disaccharide serves as the substrate recognition motif. The protein is Protein O-mannose kinase (Pomk) of Rattus norvegicus (Rat).